The primary structure comprises 1226 residues: E3 ubiquitin-protein ligase mind-bomb (1226 aa).

The segment covering 1-12 (MSCAATLSSAKD) has biased composition (polar residues). Disordered stretches follow at residues 1–42 (MSCA…NTNT) and 66–87 (GGGG…AGGV). Residues 19-30 (SGGGGGGGGGGA) show a composition bias toward gly residues. 2 stretches are compositionally biased toward low complexity: residues 31 to 42 (PTNSNTNTNTNT) and 73 to 86 (GGTT…AAGG). The region spanning 100–168 (VRRFSMEGVG…AYDLRILDSA (69 aa)) is the MIB/HERC2 1 domain. The segment at 174–226 (HEGTMCDTCRQQPIFGIRWKCAECINYDLCSICYHGDKHHLRHRFYRITTPGG) adopts a ZZ-type zinc-finger fold. 8 residues coordinate Zn(2+): C179, C182, C194, C197, C203, C206, H212, and H216. The MIB/HERC2 2 domain maps to 237 to 315 (SKKVLARGIF…MADLKVVNDA (79 aa)). ANK repeat units follow at residues 567-596 (AGHT…DVEI), 600-629 (DGDR…DLNA), 633-662 (RRQT…HPSL), 666-695 (EGDT…DITL), 699-731 (NGFN…IVEE), 735-765 (DGYT…NMDR), 769-798 (NLQT…DLNI), and 802-833 (DGDT…KLLM). Residues 890–919 (TDDSELPGNVAGTSSSARARAASGSLNQSS) are disordered. A compositionally biased stretch (low complexity) spans 900 to 914 (AGTSSSARARAASGS). 2 RING-type zinc fingers span residues 970-1005 (CLVC…LICR) and 1017-1052 (CLVC…VLCR). The stretch at 1159-1181 (VNNFQMDDVQKLKQQLQDIKEQT) forms a coiled coil. The RING-type 3 zinc-finger motif lies at 1183 to 1216 (CPVCFDRIKNMVFLCGHGTCQMCGDQIEGCPICR).

Interacts with intracellular domain of Dl and Ser. In terms of tissue distribution, ubiquitous in the wing imaginal disk (at protein level).

It localises to the cytoplasm. The protein resides in the cell cortex. It catalyses the reaction S-ubiquitinyl-[E2 ubiquitin-conjugating enzyme]-L-cysteine + [acceptor protein]-L-lysine = [E2 ubiquitin-conjugating enzyme]-L-cysteine + N(6)-ubiquitinyl-[acceptor protein]-L-lysine.. The protein operates within protein modification; protein ubiquitination. Functionally, E3 ubiquitin-protein ligase that mediates ubiquitination of Delta (Dl) and Serrate (Ser) receptors, which act as ligands of Notch proteins. Positively regulates the Notch signaling by ubiquitinating the intracellular domain of Dl and Ser, leading to endocytosis of Dl and Ser receptors. Regulates a subset of Notch signaling events, including wing margin specification, leg segmentation and vein determination, that are distinct from those events requiring neuralize (neur) activity. Also modulates lateral inhibition, a neur- and Dl-dependent signaling event, suggesting a distinct but partially complementary function with neur. The protein is E3 ubiquitin-protein ligase mind-bomb (mib1) of Drosophila melanogaster (Fruit fly).